Here is a 226-residue protein sequence, read N- to C-terminus: Ribose-5-phosphate isomerase A (226 aa).

Residues 28–31, 80–83, and 93–96 contribute to the substrate site; these read TGST, DGAD, and KGGG. E102 acts as the Proton acceptor in catalysis. K120 contributes to the substrate binding site.

The protein belongs to the ribose 5-phosphate isomerase family. As to quaternary structure, homodimer.

The catalysed reaction is aldehydo-D-ribose 5-phosphate = D-ribulose 5-phosphate. Its pathway is carbohydrate degradation; pentose phosphate pathway; D-ribose 5-phosphate from D-ribulose 5-phosphate (non-oxidative stage): step 1/1. Catalyzes the reversible conversion of ribose-5-phosphate to ribulose 5-phosphate. This Caulobacter sp. (strain K31) protein is Ribose-5-phosphate isomerase A.